The following is a 314-amino-acid chain: tRNA pseudouridine synthase B (314 aa).

His43 is a binding site for substrate. Residue Asp48 is the Nucleophile of the active site. Substrate-binding residues include Tyr76, Tyr179, and Leu200.

It belongs to the pseudouridine synthase TruB family. Type 1 subfamily.

The catalysed reaction is uridine(55) in tRNA = pseudouridine(55) in tRNA. Functionally, responsible for synthesis of pseudouridine from uracil-55 in the psi GC loop of transfer RNAs. In Shigella flexneri, this protein is tRNA pseudouridine synthase B.